Consider the following 469-residue polypeptide: Programmed cell death protein 4 (469 aa).

Methionine 1 carries the N-acetylmethionine modification. Disordered stretches follow at residues 1–38 (MDVE…EIKN) and 58–128 (KAKR…GTPG). At serine 25 the chain carries Phosphoserine. Residues 58–64 (KAKRRLR) carry the Nuclear localization signal motif. Serine 67 is subject to Phosphoserine; by PKB and RPS6KB1. Residues serine 68, serine 71, serine 76, and serine 78 each carry the phosphoserine modification. Positions 70–76 (DSGRGDS) match the Phosphodegron motif. Positions 74 to 83 (GDSVSDNGSD) are enriched in low complexity. The span at 84 to 93 (TLRSGVTVPT) shows a compositional bias: polar residues. Serine 94 is modified (phosphoserine). The segment covering 114–125 (KKGGAGGKGVWG) has biased composition (gly residues). Tyrosine 152 bears the Phosphotyrosine mark. The 122-residue stretch at 163–284 (AFEKTLTPII…CNTYIDSYKG (122 aa)) folds into the MI 1 domain. Phosphoserine occurs at positions 313 and 317. One can recognise an MI 2 domain in the interval 326–449 (HLVKEIDMLL…SKQLRDLCPS (124 aa)). Residues 448-454 (PSRGRKR) carry the Nuclear localization signal motif. Serine 457 is subject to Phosphoserine; by PKB.

This sequence belongs to the PDCD4 family. Interacts (via MI domains) with EIF4A2. Interacts (via MI domains) with EIF4A1 (via N-terminal domain). Heterotrimer with EIF4A1; one molecule of PDCD4 binds two molecules of EIF4A1. Interacts with EIF4G1. May form a complex with EIF4A1 and EIF4G1. The interaction between PDCD4 and EIF4A1 interferes with the interaction between EIF4A1 and EIF4G. When phosphorylated, interacts with BTRC and FBXW11. Polyubiquitinated, leading to its proteasomal degradation. Rapidly degraded in response to mitogens. Phosphorylation of the phosphodegron promotes interaction with BTRC and proteasomal degradation. Post-translationally, phosphorylated at Ser-67 by RPS6KB1 in response to mitogens; phosphorylation promotes proteasomal degradation of PDCD4.

It is found in the nucleus. The protein localises to the cytoplasm. In terms of biological role, inhibits translation initiation and cap-dependent translation. May excert its function by hindering the interaction between EIF4A1 and EIF4G. Inhibits the helicase activity of EIF4A. Modulates the activation of JUN kinase. Down-regulates the expression of MAP4K1, thus inhibiting events important in driving invasion, namely, MAPK85 activation and consequent JUN-dependent transcription. May play a role in apoptosis. Tumor suppressor. Inhibits tumor promoter-induced neoplastic transformation. Binds RNA. The sequence is that of Programmed cell death protein 4 (PDCD4) from Pongo abelii (Sumatran orangutan).